A 180-amino-acid polypeptide reads, in one-letter code: Large ribosomal subunit protein uL5 (180 aa).

Belongs to the universal ribosomal protein uL5 family. As to quaternary structure, part of the 50S ribosomal subunit; part of the 5S rRNA/L5/L18/L25 subcomplex. Contacts the 5S rRNA and the P site tRNA. Forms a bridge to the 30S subunit in the 70S ribosome.

Functionally, this is one of the proteins that bind and probably mediate the attachment of the 5S RNA into the large ribosomal subunit, where it forms part of the central protuberance. In the 70S ribosome it contacts protein S13 of the 30S subunit (bridge B1b), connecting the 2 subunits; this bridge is implicated in subunit movement. Contacts the P site tRNA; the 5S rRNA and some of its associated proteins might help stabilize positioning of ribosome-bound tRNAs. The sequence is that of Large ribosomal subunit protein uL5 from Brevibacillus brevis (strain 47 / JCM 6285 / NBRC 100599).